The sequence spans 429 residues: Phosphoribosylamine--glycine ligase (429 aa).

Residues 109 to 316 (KDFLARHKIP…LVELCLKACD (208 aa)) form the ATP-grasp domain. Residue 135–196 (LREKGTPIVV…EEFLDGEEAS (62 aa)) participates in ATP binding. Residues glutamate 286 and asparagine 288 each contribute to the Mg(2+) site.

This sequence belongs to the GARS family. It depends on Mg(2+) as a cofactor. Requires Mn(2+) as cofactor.

The catalysed reaction is 5-phospho-beta-D-ribosylamine + glycine + ATP = N(1)-(5-phospho-beta-D-ribosyl)glycinamide + ADP + phosphate + H(+). The protein operates within purine metabolism; IMP biosynthesis via de novo pathway; N(1)-(5-phospho-D-ribosyl)glycinamide from 5-phospho-alpha-D-ribose 1-diphosphate: step 2/2. The polypeptide is Phosphoribosylamine--glycine ligase (Haemophilus influenzae (strain ATCC 51907 / DSM 11121 / KW20 / Rd)).